The chain runs to 468 residues: 3-isopropylmalate dehydratase large subunit (468 aa).

[4Fe-4S] cluster is bound by residues cysteine 347, cysteine 408, and cysteine 411.

This sequence belongs to the aconitase/IPM isomerase family. LeuC type 1 subfamily. In terms of assembly, heterodimer of LeuC and LeuD. The cofactor is [4Fe-4S] cluster.

The catalysed reaction is (2R,3S)-3-isopropylmalate = (2S)-2-isopropylmalate. Its pathway is amino-acid biosynthesis; L-leucine biosynthesis; L-leucine from 3-methyl-2-oxobutanoate: step 2/4. Catalyzes the isomerization between 2-isopropylmalate and 3-isopropylmalate, via the formation of 2-isopropylmaleate. The polypeptide is 3-isopropylmalate dehydratase large subunit (Janthinobacterium sp. (strain Marseille) (Minibacterium massiliensis)).